The primary structure comprises 109 residues: uncharacterized protein (109 aa).

A helical membrane pass occupies residues 75–95 (LHFFFLFWLLNFILFFRIHLY).

The protein resides in the membrane. This is an uncharacterized protein from Schizosaccharomyces pombe (strain 972 / ATCC 24843) (Fission yeast).